We begin with the raw amino-acid sequence, 261 residues long: Sepiapterin reductase (261 aa).

An N-acetylmethionine modification is found at methionine 1. 15–21 (GASRGFG) is an NADP(+) binding site. Serine 33 is subject to Phosphoserine. NADP(+) is bound at residue 43–44 (RS). Serine 46 is modified (phosphoserine). 70–71 (DL) lines the NADP(+) pocket. Residues 158–159 (SL) and tyrosine 171 each bind substrate. Lysine 175 is a binding site for NADP(+). Serine 196 is subject to Phosphoserine. Glycine 200 lines the substrate pocket. 202-207 (LDNDMQ) provides a ligand contact to NADP(+). Serine 214 is modified (phosphoserine). Substrate-binding residues include lysine 222 and aspartate 258.

Belongs to the sepiapterin reductase family. In terms of assembly, homodimer.

Its subcellular location is the cytoplasm. The catalysed reaction is L-erythro-7,8-dihydrobiopterin + NADP(+) = L-sepiapterin + NADPH + H(+). The enzyme catalyses (6R)-L-erythro-5,6,7,8-tetrahydrobiopterin + 2 NADP(+) = 6-pyruvoyl-5,6,7,8-tetrahydropterin + 2 NADPH + 2 H(+). Catalyzes the final one or two reductions in tetra-hydrobiopterin biosynthesis to form 5,6,7,8-tetrahydrobiopterin. The sequence is that of Sepiapterin reductase (Spr) from Mus musculus (Mouse).